The chain runs to 32 residues: ARIECDCGSIENPCCYATTCKLRPGSQCAEGM.

2 disulfide bridges follow: cysteine 5–cysteine 14 and cysteine 7–cysteine 15.

Belongs to the venom metalloproteinase (M12B) family. P-II subfamily. P-IIa sub-subfamily. Monomer. In terms of tissue distribution, expressed by the venom gland.

The protein localises to the secreted. Snake venom metalloproteinase that impairs hemostasis in the envenomed animal. The protein is Zinc metalloproteinase/disintegrin-like CdtV1 of Crotalus durissus terrificus (South American rattlesnake).